Reading from the N-terminus, the 630-residue chain is Auxin efflux carrier component 2 (630 aa).

Topologically, residues M1 to D6 are extracellular. Residues I7–S27 form a helical membrane-spanning segment. The Cytoplasmic segment spans residues V28–Q38. A helical transmembrane segment spans residues C39–I59. Residue V51 coordinates (indol-3-yl)acetate. The Extracellular segment spans residues S60 to R70. A helical transmembrane segment spans residues F71–N91. At L92–W108 the chain is on the cytoplasmic side. A helical transmembrane segment spans residues T109–L129. N120 and L122 together coordinate (indol-3-yl)acetate. At R130–S139 the chain is on the extracellular side. A helical transmembrane segment spans residues L140–F160. Residue Y153 participates in (indol-3-yl)acetate binding. Topologically, residues E161–S490 are cytoplasmic. Residues A317 to S350 form a disordered region. Positions P325–M335 are enriched in pro residues. A helical transmembrane segment spans residues L491–I511. The Extracellular segment spans residues K512–S514. The helical transmembrane segment at I515–A535 threads the bilayer. Residues L536–T549 are Cytoplasmic-facing. A helical membrane pass occupies residues F550–I570. Topologically, residues G571 to G574 are extracellular. Residues V575–F595 traverse the membrane as a helical segment. Residues I590 and V591 each coordinate (indol-3-yl)acetate. At A596–A609 the chain is on the cytoplasmic side. A helical membrane pass occupies residues V610–I630.

The protein belongs to the auxin efflux carrier (TC 2.A.69.1) family. Homodimer. Expressed in roots, leaves, shoot apex and panicles. Expressed in roots, stem bases and young panicles.

It localises to the membrane. Acts as a component of the auxin efflux carrier. Involved in the basipetal polar auxin transport which contributes to the spreading growth of the tillers. This chain is Auxin efflux carrier component 2, found in Oryza sativa subsp. japonica (Rice).